The following is a 332-amino-acid chain: L-lactate dehydrogenase A chain (332 aa).

Ala-2 carries the post-translational modification N-acetylalanine. Residue Lys-5 is modified to N6-acetyllysine; alternate. Lys-5 carries the N6-succinyllysine; alternate modification. Tyr-10 carries the phosphotyrosine modification. Residue Lys-14 is modified to N6-acetyllysine. Residue Thr-18 is modified to Phosphothreonine. Position 29–57 (29–57 (GAVGMACAISILMKDLADELALVDVIEDK)) interacts with NAD(+). Lys-57 bears the N6-acetyllysine; alternate mark. Lys-57 is covalently cross-linked (Glycyl lysine isopeptide (Lys-Gly) (interchain with G-Cter in SUMO2); alternate). Lys-81 bears the N6-acetyllysine mark. Arg-99 contributes to the NAD(+) binding site. Residue Arg-106 coordinates substrate. An N6-acetyllysine; alternate modification is found at Lys-118. Lys-118 bears the N6-succinyllysine; alternate mark. N6-acetyllysine is present on Lys-126. Asn-138 serves as a coordination point for NAD(+). Substrate is bound by residues Asn-138 and Arg-169. His-193 acts as the Proton acceptor in catalysis. Residues Lys-224 and Lys-232 each carry the N6-acetyllysine modification. Tyr-239 carries the post-translational modification Phosphotyrosine. Lys-243 carries the post-translational modification N6-acetyllysine. Thr-248 lines the substrate pocket. Residue Thr-309 is modified to Phosphothreonine. Ser-310 is modified (phosphoserine). Lys-318 is subject to N6-acetyllysine; alternate. Lys-318 is subject to N6-succinyllysine; alternate. Thr-322 is subject to Phosphothreonine.

The protein belongs to the LDH/MDH superfamily. LDH family. As to quaternary structure, homotetramer. Interacts with PTEN upstream reading frame protein MP31. Interacts with folliculin FLCN; the interaction is direct and inhibits enzymatic activity. ISGylated. As to expression, predominantly expressed in anaerobic tissues such as skeletal muscle and liver.

It localises to the cytoplasm. It catalyses the reaction (S)-lactate + NAD(+) = pyruvate + NADH + H(+). It participates in fermentation; pyruvate fermentation to lactate; (S)-lactate from pyruvate: step 1/1. With respect to regulation, fermentation of pyruvate to lactate is inhibited when bound to folliculin FLCN, perhaps partly by FLCN preventing binding of cofactor NADH. Its function is as follows. Interconverts simultaneously and stereospecifically pyruvate and lactate with concomitant interconversion of NADH and NAD(+). The sequence is that of L-lactate dehydrogenase A chain from Homo sapiens (Human).